Consider the following 426-residue polypeptide: Inositol hexakisphosphate kinase 2 (426 aa).

ATP is bound by residues 207–209 and aspartate 220; that span reads ENL. Residues lysine 222 and 236–243 each bind substrate; that span reads KAANQIRK. An ATP-binding site is contributed by aspartate 383. Residue histidine 386 participates in substrate binding.

The protein belongs to the inositol phosphokinase (IPK) family.

It localises to the nucleus. It carries out the reaction 1D-myo-inositol hexakisphosphate + ATP = 5-diphospho-1D-myo-inositol 1,2,3,4,6-pentakisphosphate + ADP. It participates in phospholipid metabolism; phosphatidylinositol metabolism. Its activity is regulated as follows. Inhibited by flavonoids, including myricetin, quercetin, luteolin, isorhamnetin, rhamnetin, kaempferol, diosmetin and apigenin. In terms of biological role, converts inositol hexakisphosphate (InsP6) to diphosphoinositol pentakisphosphate (InsP7/PP-InsP5). The polypeptide is Inositol hexakisphosphate kinase 2 (Homo sapiens (Human)).